The sequence spans 693 residues: Putative tyrosinase-like protein tyr-3 (693 aa).

Positions 1 to 18 (MIRYIILLVYFLIFEVNS) are cleaved as a signal peptide. The Cu cation site is built by histidine 142, histidine 152, histidine 161, histidine 281, histidine 285, and histidine 308. 4 ShKT domains span residues 472–506 (CFNE…CRQC), 516–550 (CSDR…CQKC), 591–625 (CYNE…CGVC), and 634–667 (CADY…CNTC). Disulfide bonds link cysteine 472–cysteine 506, cysteine 479–cysteine 499, cysteine 488–cysteine 503, cysteine 516–cysteine 550, cysteine 523–cysteine 543, cysteine 532–cysteine 547, cysteine 591–cysteine 625, cysteine 598–cysteine 618, cysteine 607–cysteine 622, cysteine 634–cysteine 667, cysteine 641–cysteine 660, and cysteine 650–cysteine 664.

It belongs to the tyrosinase family. Requires Cu(2+) as cofactor.

The polypeptide is Putative tyrosinase-like protein tyr-3 (tyr-3) (Caenorhabditis elegans).